Reading from the N-terminus, the 1385-residue chain is Coiled-coil domain-containing protein 7 (1385 aa).

The stretch at 299–330 (LDAEYKQMQCDFQLLSEEKLVLENELQKLKDK) forms a coiled coil. The tract at residues 329–364 (DKEKTKPTNNRTKKAVKTVKKKDKGKSEDSEKKMSP) is disordered. Residues 339 to 352 (RTKKAVKTVKKKDK) are compositionally biased toward basic residues. Positions 353-364 (GKSEDSEKKMSP) are enriched in basic and acidic residues. Residues 374 to 411 (LDQVQKVARLEIENKVLQEQLKQALQEAEKAKHQLNYF) are a coiled coil. 3 disordered regions span residues 422–545 (GKTE…SKEV), 572–752 (TESK…EPNE), and 809–834 (TKKL…LKHQ). The segment covering 425–436 (ETTMQVGNSQTK) has biased composition (polar residues). Basic and acidic residues-rich tracts occupy residues 437–455 (VKGE…RKSL) and 481–490 (LIEKSSEKKR). Polar residues-rich tracts occupy residues 493–503 (PAISDLSQILK), 511–528 (LESS…YKSP), and 536–545 (LTTVSSSKEV). The span at 573–589 (ESKKADVSEEQLQKMTE) shows a compositional bias: basic and acidic residues. Positions 654 to 664 (RIQSETKNLKA) are enriched in polar residues. 2 stretches are compositionally biased toward basic and acidic residues: residues 665–676 (TRNESFHSHNDV) and 685–697 (QDTK…EVKK). Polar residues predominate over residues 701–711 (FQDNQLSTHNE). Residues 712-726 (VPNERLVVEHQESLS) are compositionally biased toward basic and acidic residues.

As to expression, expressed in epithelium of normal cervix and cervical cancer. Overexpressed in early and interim cervical cancer.

In terms of biological role, may play a role in tumorigenesis. The sequence is that of Coiled-coil domain-containing protein 7 (CCDC7) from Homo sapiens (Human).